A 121-amino-acid polypeptide reads, in one-letter code: Large ribosomal subunit protein uL22 (121 aa).

This sequence belongs to the universal ribosomal protein uL22 family. In terms of assembly, part of the 50S ribosomal subunit.

Functionally, this protein binds specifically to 23S rRNA; its binding is stimulated by other ribosomal proteins, e.g. L4, L17, and L20. It is important during the early stages of 50S assembly. It makes multiple contacts with different domains of the 23S rRNA in the assembled 50S subunit and ribosome. Its function is as follows. The globular domain of the protein is located near the polypeptide exit tunnel on the outside of the subunit, while an extended beta-hairpin is found that lines the wall of the exit tunnel in the center of the 70S ribosome. The polypeptide is Large ribosomal subunit protein uL22 (Micrococcus luteus (strain ATCC 4698 / DSM 20030 / JCM 1464 / CCM 169 / CCUG 5858 / IAM 1056 / NBRC 3333 / NCIMB 9278 / NCTC 2665 / VKM Ac-2230) (Micrococcus lysodeikticus)).